Consider the following 411-residue polypeptide: ACT domain-containing protein ACR9 (411 aa).

ACT domains are found at residues Val22–Lys105, Leu111–Pro194, and Leu243–Val322.

Functionally, may bind amino acids. The sequence is that of ACT domain-containing protein ACR9 from Arabidopsis thaliana (Mouse-ear cress).